The following is a 596-amino-acid chain: MLFLRFKFFNNRLLFVSVLCFVICVSCKREHKEIKIKGEKATELKLPERPNILWLVTEDMGAYIPPFGDSTVVTPHLSKLAKEGVIYPNLYSTSGVCAPSRAAIATGMYPSSIGANHMRTNSFTKERGLPAYEAVPPSNVRMLSEWLRKAGYYCTNNYKTDYQFKAPVTAWDESSPYAHWRNRNDDQPFFAVFNFTDTHESGLFEPYGLREIETRLYRAGDTTYQWKNYGASHANNRMSEAETPQYLSKDTKFNIPPYLPETDLVKRDMWKLYNNIGEMDNQVGAVLQQLEDDGLLENTIIFFYGDHGGPLPREKRLIYDSGLNTPMIIRFPNKLEAETSDPQLISFVDFAPTLLSIIGEKPKEYMQGQAFLGQYKNKERSYIHAAADRFDAETDVIRAVRDKRFKYIRNYRPEQGYYLPIDYRERIPTMQELLRLKAEGKLNEEQMQWFRDVKPEEELFDCKSDPFELKNLANNPEYQNKLVELRKELDRWLTAIGDDANLPESELINKLWNGSNTQPVTSDPKVSINNGNITISCDTEGASVGYKIVTAGNKTSKTWHIYNGPFKMPLGSTLEIIAHRIGFKPSKAIQISTSDL.

Positions 1 to 27 (MLFLRFKFFNNRLLFVSVLCFVICVSC) are cleaved as a signal peptide. Ca(2+) contacts are provided by E58, D59, C97, D306, and H307. The Nucleophile role is filled by C97. C97 carries the 3-oxoalanine (Cys) modification.

It belongs to the sulfatase family. Requires Ca(2+) as cofactor. In terms of processing, the conversion to 3-oxoalanine (also known as C-formylglycine, FGly), of a serine or cysteine residue in prokaryotes and of a cysteine residue in eukaryotes, is critical for catalytic activity.

It localises to the periplasm. In terms of biological role, sulfatase involved in ulvan degradation. Ulvan is the main polysaccharide component of the Ulvales (green seaweed) cell wall. It is composed of disaccharide building blocks comprising 3-sulfated rhamnose (Rha3S) linked to D-glucuronic acid (GlcA), L-iduronic acid (IduA), or D-xylose (Xyl). The sulfatase desulfates Xyl2S-Rha3S, product of the degradation of ulvan by endo-acting alpha-1,4-L-rhamnosidase, to Xyl-Rha3S. The polypeptide is Ulvan-active sulfatase (Formosa agariphila (strain DSM 15362 / KCTC 12365 / LMG 23005 / KMM 3901 / M-2Alg 35-1)).